A 509-amino-acid chain; its full sequence is MDIRAAEISAILKEQIKNFGKEAEVSEVGQVLFVGDGIARVYGLDNVQAGEMVEFPGGIRGMALNLESDNVGVVIFGADRDIKEGDVVKRTGAIVDVPVGPELLGRVVDALGNPIDGKGPIKAKERRRVDVKAPGIIPRKSVHEPMSTGLKAIDALIPVGRGQRELVIGDRQTGKTAIILDTFLNQKPIHDNGPDKDKLYCVYVAVGQKRSTVAQFVKVLEERGALEYSIVVAATASDPAPMQYLAPFAGCAMGEYFRDNGQHALIGYDDLSKQAVAYRQMSLLLRRPPGREAYPGDVFYLHSRLLERAAKLNDENGAGSLTALPVIETQGNDVSAFIPTNVISITDGQIFLETNLFYQGIRPAVNVGLSVSRVGSSAQIKAMKQVAGSIKGELAQYREMAAFAQFGSDLDAATQRLLNRGARLTELLKQPQFSPLKTEEQVAVIYAGVNGYLDKLAVNQVGKFEEGLLASLRTEHKDVLEGIRNEKALTDDLKAKLKAAIDAFAKSFA.

Residue 169–176 participates in ATP binding; that stretch reads GDRQTGKT.

Belongs to the ATPase alpha/beta chains family. F-type ATPases have 2 components, CF(1) - the catalytic core - and CF(0) - the membrane proton channel. CF(1) has five subunits: alpha(3), beta(3), gamma(1), delta(1), epsilon(1). CF(0) has three main subunits: a(1), b(2) and c(9-12). The alpha and beta chains form an alternating ring which encloses part of the gamma chain. CF(1) is attached to CF(0) by a central stalk formed by the gamma and epsilon chains, while a peripheral stalk is formed by the delta and b chains.

Its subcellular location is the cell inner membrane. It carries out the reaction ATP + H2O + 4 H(+)(in) = ADP + phosphate + 5 H(+)(out). In terms of biological role, produces ATP from ADP in the presence of a proton gradient across the membrane. The alpha chain is a regulatory subunit. This is ATP synthase subunit alpha from Brucella ovis (strain ATCC 25840 / 63/290 / NCTC 10512).